The following is a 129-amino-acid chain: Small ribosomal subunit protein bS6 (129 aa).

This sequence belongs to the bacterial ribosomal protein bS6 family.

Its function is as follows. Binds together with bS18 to 16S ribosomal RNA. The chain is Small ribosomal subunit protein bS6 from Pelobacter propionicus (strain DSM 2379 / NBRC 103807 / OttBd1).